The chain runs to 274 residues: NH(3)-dependent NAD(+) synthetase (274 aa).

Residue 46–53 (GISGGQDS) participates in ATP binding. Position 52 (aspartate 52) interacts with Mg(2+). Arginine 140 is a deamido-NAD(+) binding site. Residue threonine 160 coordinates ATP. Glutamate 165 is a Mg(2+) binding site. Positions 173 and 180 each coordinate deamido-NAD(+). Positions 189 and 211 each coordinate ATP. 260–261 (HK) lines the deamido-NAD(+) pocket.

Belongs to the NAD synthetase family. In terms of assembly, homodimer.

The catalysed reaction is deamido-NAD(+) + NH4(+) + ATP = AMP + diphosphate + NAD(+) + H(+). It functions in the pathway cofactor biosynthesis; NAD(+) biosynthesis; NAD(+) from deamido-NAD(+) (ammonia route): step 1/1. Catalyzes the ATP-dependent amidation of deamido-NAD to form NAD. Uses ammonia as a nitrogen source. This chain is NH(3)-dependent NAD(+) synthetase, found in Listeria monocytogenes serovar 1/2a (strain ATCC BAA-679 / EGD-e).